The sequence spans 91 residues: DNA-binding protein HU (91 aa).

It belongs to the bacterial histone-like protein family.

In terms of biological role, histone-like DNA-binding protein which is capable of wrapping DNA to stabilize it, and thus to prevent its denaturation under extreme environmental conditions. Also seems to act as a fortuitous virulence factor in delayed sequelae by binding to heparan sulfate-proteoglycans in the extracellular matrix of target organs and acting as a nidus for in situ immune complex formation. The sequence is that of DNA-binding protein HU (hup) from Streptococcus mutans serotype c (strain ATCC 700610 / UA159).